A 104-amino-acid polypeptide reads, in one-letter code: SOSS complex subunit C (104 aa).

The residue at position 2 (Ala2) is an N-acetylalanine. Ser50 carries the post-translational modification Phosphoserine.

It belongs to the SOSS-C family. Component of the SOSS complex, composed of SOSS-B (SOSS-B1/NABP2 or SOSS-B2/NABP1), SOSS-A/INTS3 and SOSS-C/INIP. SOSS complexes containing SOSS-B1/NABP2 are more abundant than complexes containing SOSS-B2/NABP1. Interacts with INTS3; the interaction is direct.

It is found in the nucleus. In terms of biological role, component of the SOSS complex, a multiprotein complex that functions downstream of the MRN complex to promote DNA repair and G2/M checkpoint. The SOSS complex associates with single-stranded DNA at DNA lesions and influences diverse endpoints in the cellular DNA damage response including cell-cycle checkpoint activation, recombinational repair and maintenance of genomic stability. Required for efficient homologous recombination-dependent repair of double-strand breaks (DSBs) and ATM-dependent signaling pathways. In Mus musculus (Mouse), this protein is SOSS complex subunit C (Inip).